A 690-amino-acid polypeptide reads, in one-letter code: Xylosyl- and glucuronyltransferase LARGE2 (690 aa).

The Cytoplasmic segment spans residues 1–7; that stretch reads MLPRGRP. A helical; Signal-anchor for type II membrane protein transmembrane segment spans residues 8-28; the sequence is RALGAALLLLLLLVVGFFLFG. The Lumenal portion of the chain corresponds to 29-690; that stretch reads RDPEYGLGTT…TALQQSRSRA (662 aa). N-linked (GlcNAc...) asparagine glycosylation is found at asparagine 50 and asparagine 77. Positions 67-342 are xylosyltransferase activity; sequence LHVAIVCAGY…FLGFDGKLLC (276 aa). Aspartate 171 and aspartate 173 together coordinate Mn(2+). A glycan (N-linked (GlcNAc...) asparagine) is linked at asparagine 201. The interval 343 to 686 is glucuronyltransferase activity; sequence RELFGCPNQF…LKYLTALQQS (344 aa). Mn(2+) is bound by residues aspartate 491 and aspartate 493.

This sequence in the C-terminal section; belongs to the glycosyltransferase 49 family. In the N-terminal section; belongs to the glycosyltransferase 8 family. Interacts with B4GAT1. Mn(2+) is required as a cofactor.

The protein localises to the golgi apparatus membrane. It catalyses the reaction 3-O-[beta-D-GlcA-(1-&gt;3)-beta-D-Xyl-(1-&gt;4)-Rib-ol-P-Rib-ol-P-3-beta-D-GalNAc-(1-&gt;3)-beta-D-GlcNAc-(1-&gt;4)-(O-6-P-alpha-D-Man)]-Thr-[protein] + UDP-alpha-D-xylose = 3-O-[alpha-D-Xyl-(1-&gt;3)-beta-D-GlcA-(1-&gt;4)-beta-D-Xyl-(1-&gt;4)-Rib-ol-P-Rib-ol-P-3-beta-D-GalNAc-(1-&gt;3)-beta-D-GlcNAc-(1-&gt;4)-(O-6-P-alpha-D-Man)]-Thr-[protein] + UDP + H(+). The enzyme catalyses 3-O-{(1-&gt;[3)-alpha-D-Xyl-(1-&gt;3)-beta-D-GlcA-(1-&gt;](n)-4)-beta-D-Xyl-(1-&gt;4)-Rib-ol-P-Rib-ol-P-3-beta-D-GalNAc-(1-&gt;3)-beta-D-GlcNAc-(1-&gt;4)-O-6-P-alpha-D-Man}-L-Thr-[protein] + UDP-alpha-D-glucuronate = 3-O-{beta-D-GlcA-(1-&gt;[3)-alpha-D-Xyl-(1-&gt;3)-beta-D-GlcA-(1-&gt;](n)-4)-beta-D-Xyl-(1-&gt;4)-Rib-ol-P-Rib-ol-P-3-beta-D-GalNAc-(1-&gt;3)-beta-D-GlcNAc-(1-&gt;4)-O-6-P-alpha-D-Man}-L-Thr-[protein] + UDP + H(+). The catalysed reaction is 3-O-{beta-D-GlcA-(1-&gt;[3)-alpha-D-Xyl-(1-&gt;3)-beta-D-GlcA-(1-&gt;](n)-4)-beta-D-Xyl-(1-&gt;4)-Rib-ol-P-Rib-ol-P-3-beta-D-GalNAc-(1-&gt;3)-beta-D-GlcNAc-(1-&gt;4)-O-6-P-alpha-D-Man}-L-Thr-[protein] + UDP-alpha-D-xylose = 3-O-{(1-&gt;[3)-alpha-D-Xyl-(1-&gt;3)-beta-D-GlcA-(1-&gt;](n+1)-4)-beta-D-Xyl-(1-&gt;4)-Rib-ol-P-Rib-ol-P-3-beta-D-GalNAc-(1-&gt;3)-beta-D-GlcNAc-(1-&gt;4)-O-6-P-alpha-D-Man}-L-Thr-[protein] + UDP + H(+). It participates in protein modification; protein glycosylation. Bifunctional glycosyltransferase with both alpha-1,3-xylosyltransferase and beta-1,3-glucuronyltransferase activities involved in the maturation of alpha-dystroglycan (DAG1) by glycosylation leading to DAG1 binding to laminin G-like domain-containing extracellular proteins with high affinity and in a phosphorylated-O-mannosyl trisaccharide dependent manner. Elongates the glucuronyl-beta-1,4-xylose-beta disaccharide primer structure by adding repeating units [-3-Xylose-alpha-1,3-GlcA-beta-1-] to produce a heteropolysaccharide. Supports the maturation of DAG1 more effectively than LARGE1. In addition, can modify both heparan sulfate (HS)- and chondroitin/dermatan sulfate (CS/DS)-proteoglycans (PGs), namely GPC4, with a glycosaminoglycan (GAG)-like polysaccharide composed of xylose and glucuronic acid to confer laminin binding. The sequence is that of Xylosyl- and glucuronyltransferase LARGE2 from Rattus norvegicus (Rat).